A 532-amino-acid polypeptide reads, in one-letter code: Probable C4-dicarboxylate sensor kinase (532 aa).

The Cytoplasmic segment spans residues 1–12 (MRLFRQLSIQWK). The chain crosses the membrane as a helical span at residues 13-33 (ITILSFGIVAFALMMVSISLL). Residues 34–175 (GYVTSIKEDE…YADMIQEFWQ (142 aa)) lie on the Extracellular side of the membrane. Residues 176 to 196 (PALLIGLITALFGFWGSWLLA) form a helical membrane-spanning segment. The Cytoplasmic portion of the chain corresponds to 197 to 532 (SHIKRQTFNM…FSIYLPKKRG (336 aa)). The PAS domain maps to 216 to 279 (VERDASFNAI…PEILSIGKPL (64 aa)). The Histidine kinase domain maps to 315–531 (SDVDRLAEEL…TFSIYLPKKR (217 aa)). H339 bears the Phosphohistidine; by autocatalysis mark.

It is found in the cell membrane. The enzyme catalyses ATP + protein L-histidine = ADP + protein N-phospho-L-histidine.. Its function is as follows. Member of the two-component regulatory system DctS/DctR. Probably activates DctR by phosphorylation. Essential for expression of dctP. This chain is Probable C4-dicarboxylate sensor kinase (dctS), found in Halalkalibacterium halodurans (strain ATCC BAA-125 / DSM 18197 / FERM 7344 / JCM 9153 / C-125) (Bacillus halodurans).